Consider the following 348-residue polypeptide: Dihydroorotate dehydrogenase (quinone) (348 aa).

Residues 65 to 69 and Thr-89 contribute to the FMN site; that span reads AGLDK. Lys-69 provides a ligand contact to substrate. Residue 114–118 coordinates substrate; the sequence is NRLGF. FMN-binding residues include Asn-147 and Asn-180. Substrate is bound at residue Asn-180. Ser-183 serves as the catalytic Nucleophile. Asn-185 provides a ligand contact to substrate. 2 residues coordinate FMN: Lys-225 and Thr-253. 254-255 lines the substrate pocket; sequence NT. Residues Gly-276, Gly-305, and 326–327 each bind FMN; that span reads YS.

The protein belongs to the dihydroorotate dehydrogenase family. Type 2 subfamily. As to quaternary structure, monomer. FMN is required as a cofactor.

The protein resides in the cell membrane. It catalyses the reaction (S)-dihydroorotate + a quinone = orotate + a quinol. It participates in pyrimidine metabolism; UMP biosynthesis via de novo pathway; orotate from (S)-dihydroorotate (quinone route): step 1/1. Functionally, catalyzes the conversion of dihydroorotate to orotate with quinone as electron acceptor. This is Dihydroorotate dehydrogenase (quinone) from Delftia acidovorans (strain DSM 14801 / SPH-1).